The chain runs to 162 residues: RNA pyrophosphohydrolase (162 aa).

One can recognise a Nudix hydrolase domain in the interval 7-149 (KYRPCVGIML…KKEVYKTVIE (143 aa)). Residues 40-61 (GGVDDGEELEQAALRELLEEVG) carry the Nudix box motif.

It belongs to the Nudix hydrolase family. RppH subfamily. The cofactor is a divalent metal cation.

Functionally, accelerates the degradation of transcripts by removing pyrophosphate from the 5'-end of triphosphorylated RNA, leading to a more labile monophosphorylated state that can stimulate subsequent ribonuclease cleavage. The chain is RNA pyrophosphohydrolase from Wolbachia sp. subsp. Drosophila simulans (strain wRi).